We begin with the raw amino-acid sequence, 117 residues long: Inner kinetochore subunit MHF1 (117 aa).

It belongs to the TAF9 family. CENP-S/MHF1 subfamily. In terms of assembly, the MHF histone-fold complex is a heterotetramer of 2 MHF1-MHF2 heterodimers. Together with MPH1/FANCM, forms the FANCM-MHF complex. Component of the inner kinetochore constitutive centromere-associated network (CCAN).

DsDNA-binding component of a FANCM-MHF complex involved in DNA damage repair and genome maintenance. FANCM-MHF promotes gene conversion at blocked replication forks, probably by reversal of the stalled fork. Component of the kinetochore, a multiprotein complex that assembles on centromeric DNA and attaches chromosomes to spindle microtubules, mediating chromosome segregation and sister chromatid segregation during meiosis and mitosis. Component of the inner kinetochore constitutive centromere-associated network (CCAN), which serves as a structural platform for outer kinetochore assembly. The polypeptide is Inner kinetochore subunit MHF1 (Candida albicans (strain SC5314 / ATCC MYA-2876) (Yeast)).